The sequence spans 308 residues: Cytochrome b (308 aa).

4 helical membrane passes run F1–A21, W45–I66, W81–L101, and F146–T166. Heme b-binding residues include H51 and H65. Residues H150 and H164 each coordinate heme b. H169 contributes to the a ubiquinone binding site. The next 3 helical transmembrane spans lie at T194–S214, L256–H276, and L288–S308.

Belongs to the cytochrome b family. As to quaternary structure, the cytochrome bc1 complex contains 11 subunits: 3 respiratory subunits (MT-CYB, CYC1 and UQCRFS1), 2 core proteins (UQCRC1 and UQCRC2) and 6 low-molecular weight proteins (UQCRH/QCR6, UQCRB/QCR7, UQCRQ/QCR8, UQCR10/QCR9, UQCR11/QCR10 and a cleavage product of UQCRFS1). This cytochrome bc1 complex then forms a dimer. The cofactor is heme b.

It is found in the mitochondrion inner membrane. In terms of biological role, component of the ubiquinol-cytochrome c reductase complex (complex III or cytochrome b-c1 complex) that is part of the mitochondrial respiratory chain. The b-c1 complex mediates electron transfer from ubiquinol to cytochrome c. Contributes to the generation of a proton gradient across the mitochondrial membrane that is then used for ATP synthesis. The chain is Cytochrome b (MT-CYB) from Pomatostomus temporalis (Grey-crowned babbler).